We begin with the raw amino-acid sequence, 94 residues long: Large ribosomal subunit protein uL29 (94 aa).

Residues 65-94 (ANPGERKSRVFSRAKRKKKNLARLSAKAKG) are disordered. Residues 73–94 (RVFSRAKRKKKNLARLSAKAKG) show a composition bias toward basic residues.

It belongs to the universal ribosomal protein uL29 family.

In Leptospira interrogans serogroup Icterohaemorrhagiae serovar copenhageni (strain Fiocruz L1-130), this protein is Large ribosomal subunit protein uL29.